The chain runs to 590 residues: Plasmepsin V (590 aa).

Residues 1 to 544 (MNNYFLRKEN…EKENIFLKVS (544 aa)) are Lumenal-facing. Positions 33–81 (CNNVENKIDNVGKKIENVGKKIGDMENKNDNVENKNDNVGNKNDNVKNA) form a coiled coil. A Peptidase A1 domain is found at 100–514 (YFLDIDIGKP…DLQQNQIAFI (415 aa)). The active site involves Asp-118. Disulfide bonds link Cys-128–Cys-211, Cys-131–Cys-134, Cys-155–Cys-166, Cys-160–Cys-171, Cys-259–Cys-518, Cys-389–Cys-434, and Cys-443–Cys-479. Over residues 282 to 291 (KEKQKMDKSD) the composition is skewed to basic and acidic residues. The segment at 282–316 (KEKQKMDKSDNNSSNKGNVSIKLKNNDKNDDEENN) is disordered. The segment covering 292–304 (NNSSNKGNVSIKL) has biased composition (low complexity). Residue Asp-365 is part of the active site. Residues 545–565 (YINLYCLWLLLALTILLSLIL) traverse the membrane as a helical segment. At 566–590 (YVRKMFYMDYFPLSDQNKSPIQEST) the chain is on the cytoplasmic side.

It belongs to the peptidase A1 family. Component of a complex composed of SPC25 and PMV; the interaction is mediated via the transmembrane domains. The complex interacts with the SEC61 channel-forming translocon complex and is involved in the recognition and import of PEXEL motif-containing proteins into the ER for subsequent export. In terms of processing, it is not clear if the zymogen has a cleavable propeptide. In vitro, appears to be cleaved between Asn-80 and Ala-81. Cleavage of the putative propeptide is dispensable for catalytic activity.

It localises to the endoplasmic reticulum membrane. Inhibited by peptidomimetic inhibitor WEHI-842. Inhibited by Cu(2+) and Hg(2+). Functionally, during the asexual blood stage, plays an essential role in the export of several proteins into the host erythrocytes by cleaving the pentameric localization motif RxLxE/Q/D (termed Plasmodium export element (PEXEL)) located downstream of the N-terminal secretory signal sequence. Specifically, cleaves after the leucine residue in the RxLxE/Q/D (or RxLxxE) motif of exported proteins including RESA, EMP2, EMP3, KAHRP, RIF/Rifin and STEVOR. Also, by regulating protein export, plays an essential role in gametocyte development and thus, parasite transmission to the mosquito vector. This Plasmodium falciparum (isolate 3D7) protein is Plasmepsin V.